We begin with the raw amino-acid sequence, 416 residues long: Gamma-glutamyl phosphate reductase (416 aa).

The protein belongs to the gamma-glutamyl phosphate reductase family.

The protein resides in the cytoplasm. The enzyme catalyses L-glutamate 5-semialdehyde + phosphate + NADP(+) = L-glutamyl 5-phosphate + NADPH + H(+). The protein operates within amino-acid biosynthesis; L-proline biosynthesis; L-glutamate 5-semialdehyde from L-glutamate: step 2/2. In terms of biological role, catalyzes the NADPH-dependent reduction of L-glutamate 5-phosphate into L-glutamate 5-semialdehyde and phosphate. The product spontaneously undergoes cyclization to form 1-pyrroline-5-carboxylate. In Streptococcus thermophilus (strain ATCC BAA-491 / LMD-9), this protein is Gamma-glutamyl phosphate reductase.